Here is a 1207-residue protein sequence, read N- to C-terminus: Plasma membrane calcium-transporting ATPase 4 (1207 aa).

Over Met1–Ala100 the chain is Cytoplasmic. Ser13 carries the post-translational modification Phosphoserine. The chain crosses the membrane as a helical span at residues Leu101 to Phe121. Over Tyr122–Ala147 the chain is Extracellular. The chain crosses the membrane as a helical span at residues Gly148 to Phe168. Over Asn169–Leu368 the chain is Cytoplasmic. Residues Glu294–Asp317 are disordered. Phosphoserine is present on residues Ser328 and Ser334. A helical membrane pass occupies residues Ile369–Ile389. Topologically, residues Gln390–Lys408 are extracellular. Residues Phe409–Val429 form a helical membrane-spanning segment. Residues Thr430–Phe843 lie on the Cytoplasmic side of the membrane. Asp465 serves as the catalytic 4-aspartylphosphate intermediate. Residues Asp785 and Asp789 each coordinate Mg(2+). Residues Leu844–Ile864 traverse the membrane as a helical segment. Topologically, residues Thr865–Lys871 are extracellular. The chain crosses the membrane as a helical span at residues Ala872 to Thr892. The Cytoplasmic portion of the chain corresponds to Glu893–Lys918. Residues Asn919–Glu939 traverse the membrane as a helical segment. Residues Lys940–Ser957 are Extracellular-facing. A helical membrane pass occupies residues Gln958 to Asn977. Over Ser978–Asn994 the chain is Cytoplasmic. Residues Leu995–Gly1015 traverse the membrane as a helical segment. The Extracellular segment spans residues Gly1016–Gln1028. A helical transmembrane segment spans residues Trp1029–Ile1049. At Pro1050 to Val1207 the chain is on the cytoplasmic side. The tract at residues Leu1086 to Gln1103 is calmodulin-binding subdomain A. A Phosphothreonine; by PKC modification is found at Thr1102. Positions Ile1104–Ser1113 are calmodulin-binding subdomain B. Residues Val1159–Asn1181 form a disordered region. Residues Gly1163–Asn1181 show a composition bias toward polar residues.

The protein belongs to the cation transport ATPase (P-type) (TC 3.A.3) family. Type IIB subfamily. Interacts with PDZD11. Interacts with SLC35G1 and STIM1. Interacts with calmodulin. Isoform 1 is detected in brain, heart, liver, testis and epididymis. Isoform 2 is detected in brain (at protein level), heart, seminal vesicle and epididymis. There is a shift in expression from isoform 1 to isoform 2 along the length of the epididymis from caput to cauda (at protein level).

Its subcellular location is the cell membrane. It is found in the cell projection. The protein resides in the cilium. The protein localises to the flagellum membrane. It carries out the reaction Ca(2+)(in) + ATP + H2O = Ca(2+)(out) + ADP + phosphate + H(+). Its activity is regulated as follows. Activated by calcium/calmodulin. Calcium/calmodulin-regulated and magnesium-dependent enzyme that catalyzes the hydrolysis of ATP coupled with the transport of calcium out of the cell. By regulating sperm cells calcium homeostasis, may play a role in sperm motility. In Bos taurus (Bovine), this protein is Plasma membrane calcium-transporting ATPase 4.